A 1336-amino-acid polypeptide reads, in one-letter code: SH3 domain and tetratricopeptide repeat-containing protein 1 (1336 aa).

Position 1 is an N-acetylmethionine (Met-1). Disordered stretches follow at residues 1–76 (MENL…PPCQ) and 225–266 (TGPR…SEEV). Positions 18–27 (GPVGPSGGGS) are enriched in gly residues. Basic and acidic residues predominate over residues 46-61 (AGPEEAKAPVRGDEAP). Composition is skewed to low complexity over residues 62–74 (PARV…GTPP) and 247–266 (EAAP…SEEV). One can recognise an SH3 domain in the interval 305–368 (MAVGLASALA…RSSLISMQGP (64 aa)). TPR repeat units follow at residues 560 to 593 (ARLC…LEGS), 601 to 634 (VAVY…LLGT), 665 to 698 (ARAC…HRDS), 786 to 819 (GPLY…SAIA), 863 to 896 (GVIA…ARDL), 946 to 979 (THVL…AVEM), 1027 to 1063 (GQLL…FIDL), and 1192 to 1225 (RVAY…CNSP). Position 1248 is a phosphotyrosine (Tyr-1248). A TPR 9 repeat occupies 1277-1311 (LKIYTRLATIYHNFLLDREKSLFFYQKARTFATEL).

The protein is SH3 domain and tetratricopeptide repeat-containing protein 1 (SH3TC1) of Homo sapiens (Human).